Consider the following 1247-residue polypeptide: Structural polyprotein (1247 aa).

Residues 36 to 67 (RPAGQLAQLISAVSRLALRTVPQKPRRTRKIK) form a host transcription inhibition region. The disordered stretch occupies residues 54–103 (RTVPQKPRRTRKIKKQKQVKQEQQSTTNQKKKAPKQKQTQKKKRPGRRER). Basic residues-rich tracts occupy residues 59–71 (KPRR…KQKQ) and 82–100 (QKKK…RPGR). The short motif at 60-98 (PRRTRKIKKQKQVKQEQQSTTNQKKKAPKQKQTQKKKRP) is the Nuclear localization signal element. The interval 83-113 (KKKAPKQKQTQKKKRPGRRERMCMKIENDCI) is binding to the viral RNA. The tract at residues 98–112 (PGRRERMCMKIENDC) is ribosome-binding. Cysteines 112 and 127 form a disulfide. The Peptidase S3 domain occupies 112-260 (CIFEVRHEGK…KITPEGSVEW (149 aa)). Catalysis depends on H138, which acts as the Charge relay system. The Nuclear export signal signature appears at 143 to 153 (IDNADLAKLAF). The segment at 154–159 (KRSSKY) is interaction with spike glycoprotein E2. Residue D160 is the Charge relay system of the active site. Residues 182-192 (PEGYYNWHHGA) form a dimerization of the capsid protein region. S212 functions as the Charge relay system in the catalytic mechanism. Residues 218–222 (DNKGR) are dimerization of the capsid protein. The functions as an uncleaved signal peptide for the precursor of protein E3/E2 stretch occupies residues 261-273 (SLALPVMCLLANT). 9 disulfide bridges follow: C268–C277, C282–C286, C285–C317, C343–C449, C346–C352, C415–C429, C477–C590, C525–C549, and C527–C544. N272 carries N-linked (GlcNAc...) asparagine; by host glycosylation. 2 N-linked (GlcNAc...) asparagine; by host glycosylation sites follow: N587 and N669. Residues 692–712 (IAVLAAASIVITSLVGLSLGM) form a helical membrane-spanning segment. The tract at residues 715–719 (CARRR) is interaction with the capsid protein. 3 S-palmitoyl cysteine; by host lipidation sites follow: C720, C740, and C741. Residues 720 to 740 (CITPYELTPGATIPFLLGVLC) traverse the membrane as a helical segment. Residues 720-740 (CITPYELTPGATIPFLLGVLC) form a transient transmembrane before p62-6K protein processing region. Cysteines 720 and 741 form a disulfide. Residues 763 to 783 (PLFWLQLLIPLSAAIVVCNCL) form a helical membrane-spanning segment. 4 disulfide bridges follow: C857/C922, C870/C902, C871/C904, and C876/C886. Positions 892 to 909 (VYPFMWGGAYCFCDAENT) are E1 fusion peptide loop. 2 N-linked (GlcNAc...) asparagine; by host glycosylation sites follow: N949 and N1078. Cystine bridges form between C1067–C1079, C1109–C1184, C1114–C1188, and C1136–C1178. Residues 1224 to 1244 (GVGLVVAIAALILIIVLCVSF) traverse the membrane as a helical segment. C1241 is lipidated: S-palmitoyl cysteine; by host. A lipid anchor (S-stearoyl cysteine; by host) is attached at C1241.

In terms of assembly, homodimer. Homomultimer. Interacts with host karyopherin KPNA4; this interaction allows the nuclear import of the viral capsid protein. Interacts with spike glycoprotein E2. Interacts with host IRAK1; the interaction leads to inhibition of IRAK1-dependent signaling. The precursor of protein E3/E2 and E1 form a heterodimer shortly after synthesis. As to quaternary structure, the precursor of protein E3/E2 and E1 form a heterodimer shortly after synthesis. Processing of the precursor of protein E3/E2 into E2 and E3 results in a heterodimer of the spike glycoproteins E2 and E1. Spike at virion surface are constituted of three E2-E1 heterodimers. After target cell attachment and endocytosis, E1 change conformation to form homotrimers. Interacts with 6K protein. In terms of assembly, interacts with spike glycoprotein E1. Processing of the precursor of protein E3/E2 into E2 and E3 results in a heterodimer of the spike glycoproteins E2 and E1. Spike at virion surface are constituted of a trimer of E2-E1 heterodimers. Interacts with 6K protein. Interacts with host MXRA8; this interaction mediates virus entry. Oligomer. Interacts with spike glycoprotein E1. Interacts with spike glycoprotein E2. Structural polyprotein: Specific enzymatic cleavages in vivo yield mature proteins. Capsid protein is auto-cleaved during polyprotein translation, unmasking a signal peptide at the N-terminus of the precursor of E3/E2. The remaining polyprotein is then targeted to the host endoplasmic reticulum, where host signal peptidase cleaves it into pE2, 6K and E1 proteins. pE2 is further processed to mature E3 and E2 by host furin in trans-Golgi vesicle. In terms of processing, palmitoylated via thioester bonds. These palmitoylations may induce disruption of the C-terminus transmembrane. This would result in the reorientation of E2 C-terminus from lumenal to cytoplasmic side. Post-translationally, N-glycosylated. Palmitoylated via thioester bonds.

The protein resides in the virion. The protein localises to the host cytoplasm. It localises to the host cell membrane. Its subcellular location is the host nucleus. It is found in the virion membrane. The protein resides in the host Golgi apparatus. The protein localises to the host trans-Golgi network. It localises to the host endoplasmic reticulum. It catalyses the reaction Autocatalytic release of the core protein from the N-terminus of the togavirus structural polyprotein by hydrolysis of a -Trp-|-Ser- bond.. Its function is as follows. Forms an icosahedral capsid with a T=4 symmetry composed of 240 copies of the capsid protein surrounded by a lipid membrane through which penetrate 80 spikes composed of trimers of E1-E2 heterodimers. The capsid protein binds to the viral RNA genome at a site adjacent to a ribosome binding site for viral genome translation following genome release. Possesses a protease activity that results in its autocatalytic cleavage from the nascent structural protein. Following its self-cleavage, the capsid protein transiently associates with ribosomes, and within several minutes the protein binds to viral RNA and rapidly assembles into icosahedric core particles. The resulting nucleocapsid eventually associates with the cytoplasmic domain of the spike glycoprotein E2 at the cell membrane, leading to budding and formation of mature virions. In case of infection, new virions attach to target cells and after clathrin-mediated endocytosis their membrane fuses with the host endosomal membrane. This leads to the release of the nucleocapsid into the cytoplasm, followed by an uncoating event necessary for the genomic RNA to become accessible. The uncoating might be triggered by the interaction of capsid proteins with ribosomes. Binding of ribosomes would release the genomic RNA since the same region is genomic RNA-binding and ribosome-binding. Specifically inhibits interleukin-1 receptor-associated kinase 1/IRAK1-dependent signaling during viral entry, representing a means by which the alphaviruses may evade innate immune detection and activation prior to viral gene expression. Provides the signal sequence for the translocation of the precursor of protein E3/E2 to the host endoplasmic reticulum. Furin-cleaved E3 remains associated with spike glycoprotein E1 and mediates pH protection of the latter during the transport via the secretory pathway. After virion release from the host cell, the assembly protein E3 is gradually released in the extracellular space. In terms of biological role, plays a role in viral attachment to target host cell, by binding to the cell receptor MXRA8. Synthesized as a p62 precursor which is processed by furin at the cell membrane just before virion budding, giving rise to E2-E1 heterodimer. The p62-E1 heterodimer is stable, whereas E2-E1 is unstable and dissociate at low pH. p62 is processed at the last step, presumably to avoid E1 fusion activation before its final export to cell surface. E2 C-terminus contains a transitory transmembrane that would be disrupted by palmitoylation, resulting in reorientation of the C-terminal tail from lumenal to cytoplasmic side. This step is critical since E2 C-terminus is involved in budding by interacting with capsid proteins. This release of E2 C-terminus in cytoplasm occurs lately in protein export, and precludes premature assembly of particles at the endoplasmic reticulum membrane. Functionally, acts as a viroporin that participates in virus glycoprotein processing and transport to the plasma membrane, cell permeabilization and budding of viral particles. Disrupts the calcium homeostasis of the cell, probably at the endoplasmic reticulum level. This leads to cytoplasmic calcium elevation. Because of its lipophilic properties, the 6K protein is postulated to influence the selection of lipids that interact with the transmembrane domains of the glycoproteins, which, in turn, affects the deformability of the bilayer required for the extreme curvature that occurs as budding proceeds. Present in low amount in virions, about 3% compared to viral glycoproteins. Its function is as follows. Class II viral fusion protein. Fusion activity is inactive as long as E1 is bound to E2 in mature virion. After virus attachment to target cell via host MXRA8 and endocytosis, acidification of the endosome induce dissociation of E1/E2 heterodimer and concomitant trimerization of the E1 subunits. This E1 trimer is fusion active, and promotes release of viral nucleocapsid in cytoplasm after endosome and viral membrane fusion. Efficient fusion requires the presence of cholesterol and sphingolipid in the target membrane. This O'nyong-nyong virus (strain Gulu) (ONNV) protein is Structural polyprotein.